A 270-amino-acid chain; its full sequence is Hemin import ATP-binding protein HmuV (270 aa).

Residues 5–242 form the ABC transporter domain; that stretch reads LEAEAATYSV…SLINRVFDIE (238 aa). 37–44 serves as a coordination point for ATP; it reads GPNGAGKS.

This sequence belongs to the ABC transporter superfamily. Heme (hemin) importer (TC 3.A.1.14.5) family. The complex is composed of two ATP-binding proteins (HmuV), two transmembrane proteins (HmuU) and a solute-binding protein (HmuT).

The protein resides in the cell inner membrane. Part of the ABC transporter complex HmuTUV involved in hemin import. Responsible for energy coupling to the transport system. The chain is Hemin import ATP-binding protein HmuV from Rhodopseudomonas palustris (strain BisA53).